The sequence spans 216 residues: Probable transaldolase (216 aa).

Residue Lys85 is the Schiff-base intermediate with substrate of the active site.

Belongs to the transaldolase family. Type 3B subfamily.

It is found in the cytoplasm. It catalyses the reaction D-sedoheptulose 7-phosphate + D-glyceraldehyde 3-phosphate = D-erythrose 4-phosphate + beta-D-fructose 6-phosphate. Its pathway is carbohydrate degradation; pentose phosphate pathway; D-glyceraldehyde 3-phosphate and beta-D-fructose 6-phosphate from D-ribose 5-phosphate and D-xylulose 5-phosphate (non-oxidative stage): step 2/3. Transaldolase is important for the balance of metabolites in the pentose-phosphate pathway. In Dehalococcoides mccartyi (strain ATCC BAA-2266 / KCTC 15142 / 195) (Dehalococcoides ethenogenes (strain 195)), this protein is Probable transaldolase.